A 153-amino-acid chain; its full sequence is 3-hydroxyacyl-[acyl-carrier-protein] dehydratase FabZ (153 aa).

The active site involves His54.

It belongs to the thioester dehydratase family. FabZ subfamily.

Its subcellular location is the cytoplasm. The enzyme catalyses a (3R)-hydroxyacyl-[ACP] = a (2E)-enoyl-[ACP] + H2O. Involved in unsaturated fatty acids biosynthesis. Catalyzes the dehydration of short chain beta-hydroxyacyl-ACPs and long chain saturated and unsaturated beta-hydroxyacyl-ACPs. In Shewanella pealeana (strain ATCC 700345 / ANG-SQ1), this protein is 3-hydroxyacyl-[acyl-carrier-protein] dehydratase FabZ.